A 119-amino-acid polypeptide reads, in one-letter code: Protein ELF4-LIKE 2 (119 aa).

The interval 91–119 (SVDASSEGESTGTLKSDGKANNQKRFRSG) is disordered. Polar residues predominate over residues 93–111 (DASSEGESTGTLKSDGKAN).

This sequence belongs to the EARLY FLOWERING 4 family. As to quaternary structure, homodimer.

Its subcellular location is the nucleus. In terms of biological role, component of the central CCA1/LHY-TOC1 feedback loop in the circadian clock that promotes clock accuracy and is required for sustained rhythms in the absence of daily light/dark cycles. The polypeptide is Protein ELF4-LIKE 2 (EFL2) (Arabidopsis thaliana (Mouse-ear cress)).